Consider the following 91-residue polypeptide: UPF0250 protein BP0104 (91 aa).

Belongs to the UPF0250 family.

The polypeptide is UPF0250 protein BP0104 (Bordetella pertussis (strain Tohama I / ATCC BAA-589 / NCTC 13251)).